The sequence spans 754 residues: Protein NUCLEOLAR FACTOR 1 (754 aa).

Disordered stretches follow at residues Met-1–Val-56, Ser-69–Thr-166, and Glu-390–Ser-413. Residues Ser-42 to Ser-52 show a composition bias toward acidic residues. Positions Met-80–Asp-93 are enriched in basic and acidic residues. Composition is skewed to acidic residues over residues Thr-94 to Gly-110 and Asp-138 to Val-161. Residues Ser-402 to Ser-413 show a composition bias toward polar residues.

It belongs to the UTP25 family. As to quaternary structure, component of the ribosomal small subunit (SSU) processome composed of at least 40 protein subunits and snoRNA U3. Interacts with THAL in the nucleus. Preferentially expressed in differentiating cells in young tissues such as floral buds, ovules, embryos, secondary roots, pollen, young seedlings and vascular bundles. Observed ubiquitously.

Its subcellular location is the nucleus. The protein localises to the nucleolus. Functionally, DEAD-box RNA helicase-like protein required for pre-18S rRNA processing, specifically at sites A0, A1, and A2. Involved in the control of rRNA expression. Required for embryo development and female gametogenesis. The protein is Protein NUCLEOLAR FACTOR 1 of Arabidopsis thaliana (Mouse-ear cress).